The chain runs to 272 residues: Protein FAM210A (272 aa).

Residues 117–229 (DKSISLYQRF…GYMSTPPPVK (113 aa)) form the DUF1279 domain. Residues 136-156 (VLIPVHLITSGVWFGTFYYAA) form a helical membrane-spanning segment. Residues 229–271 (KEYLQDRMEETKELITEKMEETKDRLTEKLQETKEKVSFKKKV) adopt a coiled-coil conformation. Positions 246–272 (KMEETKDRLTEKLQETKEKVSFKKKVE) are disordered.

It belongs to the FAM210 family. In terms of assembly, interacts with ATAD3A.

The protein resides in the membrane. It is found in the mitochondrion. The protein localises to the cytoplasm. May play a role in the structure and strength of both muscle and bone. This is Protein FAM210A (FAM210A) from Pongo abelii (Sumatran orangutan).